The following is a 363-amino-acid chain: Mannose-1-phosphate guanyltransferase (363 aa).

This sequence belongs to the transferase hexapeptide repeat family.

The protein resides in the cytoplasm. The catalysed reaction is alpha-D-mannose 1-phosphate + GTP + H(+) = GDP-alpha-D-mannose + diphosphate. It participates in nucleotide-sugar biosynthesis; GDP-alpha-D-mannose biosynthesis; GDP-alpha-D-mannose from alpha-D-mannose 1-phosphate (GTP route): step 1/1. Its function is as follows. Involved in cell wall synthesis where it is required for glycosylation. Involved in cell cycle progression through cell-size checkpoint. Required for the correct assembly of the septum. This is Mannose-1-phosphate guanyltransferase (mpg1) from Schizosaccharomyces pombe (strain 972 / ATCC 24843) (Fission yeast).